Reading from the N-terminus, the 251-residue chain is Phosphate import ATP-binding protein PstB 2 (251 aa).

Residues 5 to 246 (ITSKDVHLSY…PKKQITSDYL (242 aa)) form the ABC transporter domain. 37-44 (GPSGCGKS) serves as a coordination point for ATP.

It belongs to the ABC transporter superfamily. Phosphate importer (TC 3.A.1.7) family. The complex is composed of two ATP-binding proteins (PstB), two transmembrane proteins (PstC and PstA) and a solute-binding protein (PstS).

It localises to the cell membrane. It catalyses the reaction phosphate(out) + ATP + H2O = ADP + 2 phosphate(in) + H(+). Its function is as follows. Part of the ABC transporter complex PstSACB involved in phosphate import. Responsible for energy coupling to the transport system. This chain is Phosphate import ATP-binding protein PstB 2, found in Lactobacillus johnsonii (strain CNCM I-12250 / La1 / NCC 533).